A 249-amino-acid polypeptide reads, in one-letter code: T-cell immunoreceptor with Ig and ITIM domains (249 aa).

Positions 1–28 (MHGWLLLVWVQGLIQAAFLATAIGATAG) are cleaved as a signal peptide. Residues 29 to 127 (TIDTKRNISA…GGIYKGRIFL (99 aa)) enclose the Ig-like V-type domain. The Extracellular segment spans residues 29–148 (TIDTKRNISA…LAQFQTAPLG (120 aa)). The tract at residues 35 to 45 (NISAEEGGSVI) is homodimerization. Cys-48 and Cys-111 are joined by a disulfide. N-linked (GlcNAc...) asparagine glycosylation occurs at Asn-104. Residues 149-169 (GTMAAVLGLICLMVTGVTVLA) form a helical membrane-spanning segment. The Cytoplasmic portion of the chain corresponds to 170–249 (RKDKSIRMHS…ESFIAVSKTG (80 aa)). Residues 182–222 (SGLGRTEAEPQEWNLRSLSSPGSPVQTQTAPAGPCGEQAED) are disordered. Over residues 195–211 (NLRSLSSPGSPVQTQTA) the composition is skewed to polar residues. The short motif at 234-239 (LSYRSL) is the ITIM motif element.

Homodimer in cis; binds with high affinity to PVR, forming a heterotetrameric assembly of two TIGIT and two PVR molecules. Binds with lower affinity to NECTIN2 and NECTIN3. Interacts with GRB2. Interacts with NECTIN4.

The protein localises to the cell membrane. Functionally, inhibitory receptor that plays a role in the modulation of immune responses. Suppresses T-cell activation by promoting the generation of mature immunoregulatory dendritic cells. Upon binding to its ligands PVR/CD155 or NECTIN2/CD112, which are expressed on antigen-presenting cells, sends inhibitory signals to the T-cell or NK cell. Mechanistically, interaction with ligand leads to phosphorylation of the cytoplasmic tail by Src family tyrosine kinases such as FYN or LCK, allowing subsequent binding to adapter GRB2 and SHIP1/INPP5D. In turn, inhibits PI3K and MAPK signaling cascades. In addition, associates with beta-arrestin-2/ARRB2 to recruit SHIP1/INPP5D that suppresses autoubiquitination of TRAF6 and subsequently inhibits NF-kappa-B signaling pathway. Also acts as a receptor for NECTIN4 to inhibit NK cell cytotoxicity. This Mus musculus (Mouse) protein is T-cell immunoreceptor with Ig and ITIM domains.